The chain runs to 180 residues: MDNHGILESLLFTAGDEGLDEKQLLEILDMSKDQLVELIENYSSHGLMIQRFGMTYVLTTKKEAATYIEQLIEQKSQMKLSQAAMEVLSIIAYNQPLSRSDIELIRSINSDGAVKTLIAKGLVEAKVVNEQRSQQLITTDLFLNVFGISNIEDLPTTEEDDEEMDAFFSNLVNQKGENND.

It belongs to the ScpB family. Homodimer. Homodimerization may be required to stabilize the binding of ScpA to the Smc head domains. Component of a cohesin-like complex composed of ScpA, ScpB and the Smc homodimer, in which ScpA and ScpB bind to the head domain of Smc. The presence of the three proteins is required for the association of the complex with DNA.

It is found in the cytoplasm. Its function is as follows. Participates in chromosomal partition during cell division. May act via the formation of a condensin-like complex containing Smc and ScpA that pull DNA away from mid-cell into both cell halves. The sequence is that of Segregation and condensation protein B from Staphylococcus aureus (strain USA300).